Reading from the N-terminus, the 119-residue chain is MSLEQLAGRLISGDIGATAVIKMTGEIIYQSPNWSVDGVHAINVYKNREPSIIIQGVKYSVIDVNEDRLIATNVGGQGHIVGAVAGGKALLIGYVSPNGDARTAYIQIDKTARQLSKIL.

Belongs to the Asgard profilin family.

The protein resides in the cytoplasm. The protein localises to the cytoskeleton. With respect to regulation, inhibition of rabbit actin polymerization is reduced by phosphatidylinositol-(4,5)-P2(1,2-dipalmitoyl), a soluble form of the phospholipid phosphatidylinositol, suggesting an unknown lipid might regulate actin-profilin interaction in vivo. Its function is as follows. Binds to actin and affects the structure of the cytoskeleton. At high concentrations inhibits spontaneous rabbit actin nucleation. This strongly suggests this archaea has a profilin-regulated actin system, and actin-type genes can be identified in this organism. The sequence is that of Odin profilin from Odinarchaeota yellowstonii (strain LCB_4).